We begin with the raw amino-acid sequence, 448 residues long: Tubulin alpha-4A chain (448 aa).

The MREC motif signature appears at 1 to 4 (MREC). Gln-11 is a binding site for GTP. Position 40 is an N6-acetyllysine (Lys-40). Residue Ser-48 is modified to Phosphoserine. Glu-71 is a GTP binding site. Glu-71 provides a ligand contact to Mg(2+). A 3'-nitrotyrosine modification is found at Tyr-83. Ser-140, Gly-144, Thr-145, Thr-179, Asn-206, and Asn-228 together coordinate GTP. The active site involves Glu-254. Residue Tyr-432 is modified to Phosphotyrosine. Ser-439 is modified (phosphoserine).

It belongs to the tubulin family. As to quaternary structure, dimer of alpha and beta chains. A typical microtubule is a hollow water-filled tube with an outer diameter of 25 nm and an inner diameter of 15 nM. Alpha-beta heterodimers associate head-to-tail to form protofilaments running lengthwise along the microtubule wall with the beta-tubulin subunit facing the microtubule plus end conferring a structural polarity. Microtubules usually have 13 protofilaments but different protofilament numbers can be found in some organisms and specialized cells. Interacts with CFAP157. The cofactor is Mg(2+). In terms of processing, some glutamate residues at the C-terminus are polyglycylated, resulting in polyglycine chains on the gamma-carboxyl group. Glycylation is mainly limited to tubulin incorporated into axonemes (cilia and flagella) whereas glutamylation is prevalent in neuronal cells, centrioles, axonemes, and the mitotic spindle. Both modifications can coexist on the same protein on adjacent residues, and lowering polyglycylation levels increases polyglutamylation, and reciprocally. Cilia and flagella glycylation is required for their stability and maintenance. Flagella glycylation controls sperm motility. Post-translationally, some glutamate residues at the C-terminus are polyglutamylated, resulting in polyglutamate chains on the gamma-carboxyl group. Polyglutamylation plays a key role in microtubule severing by spastin (SPAST). SPAST preferentially recognizes and acts on microtubules decorated with short polyglutamate tails: severing activity by SPAST increases as the number of glutamates per tubulin rises from one to eight, but decreases beyond this glutamylation threshold. Glutamylation is also involved in cilia motility. Acetylation of alpha chains at Lys-40 is located inside the microtubule lumen. This modification has been correlated with increased microtubule stability, intracellular transport and ciliary assembly. In terms of processing, methylation of alpha chains at Lys-40 is found in mitotic microtubules and is required for normal mitosis and cytokinesis contributing to genomic stability. Post-translationally, although this tubulin does not encode a C-terminal tyrosine, a C-terminal tyrosine can be added post-translationally by the tubulin tyrosine ligase (TTL). It can then undergo a detyrosination cycle by the tubulin tyrosine carboxypeptidase (MATCAP1/KIAA0895L).

It localises to the cytoplasm. It is found in the cytoskeleton. It carries out the reaction GTP + H2O = GDP + phosphate + H(+). Functionally, tubulin is the major constituent of microtubules, a cylinder consisting of laterally associated linear protofilaments composed of alpha- and beta-tubulin heterodimers. Microtubules grow by the addition of GTP-tubulin dimers to the microtubule end, where a stabilizing cap forms. Below the cap, tubulin dimers are in GDP-bound state, owing to GTPase activity of alpha-tubulin. This chain is Tubulin alpha-4A chain (TUBA4A), found in Macaca fascicularis (Crab-eating macaque).